The primary structure comprises 567 residues: Urease subunit alpha (567 aa).

Positions 129 to 567 constitute a Urease domain; the sequence is GGIDTHIHFI…LPMAQRYFLF (439 aa). The Ni(2+) site is built by His134, His136, and Lys217. Lys217 is subject to N6-carboxylysine. His219 serves as a coordination point for substrate. 2 residues coordinate Ni(2+): His246 and His272. The active-site Proton donor is the His320. Asp360 serves as a coordination point for Ni(2+).

The protein belongs to the metallo-dependent hydrolases superfamily. Urease alpha subunit family. As to quaternary structure, heterotrimer of UreA (gamma), UreB (beta) and UreC (alpha) subunits. Three heterotrimers associate to form the active enzyme. Ni cation is required as a cofactor. Carboxylation allows a single lysine to coordinate two nickel ions.

It localises to the cytoplasm. The enzyme catalyses urea + 2 H2O + H(+) = hydrogencarbonate + 2 NH4(+). It participates in nitrogen metabolism; urea degradation; CO(2) and NH(3) from urea (urease route): step 1/1. In Delftia acidovorans (strain DSM 14801 / SPH-1), this protein is Urease subunit alpha.